A 213-amino-acid chain; its full sequence is Adenylate kinase (213 aa).

ATP is bound at residue 14–19 (GSGKGT). Positions 34-63 (SSGELFRSAIDSASPLGIKAAEYINQGLLV) are NMP. AMP-binding positions include Ser35, Arg40, 61-63 (LLV), 89-92 (GFPR), and Gln96. An LID region spans residues 129–162 (SRFICPSCKHVYNQNQGLSECPTCQMKLVRRSDD). ATP is bound at residue Arg130. Zn(2+)-binding residues include Cys133 and Cys136. An ATP-binding site is contributed by 139-140 (VY). Zn(2+) contacts are provided by Cys149 and Cys152. The AMP site is built by Arg159 and Arg170. An ATP-binding site is contributed by Ala198.

It belongs to the adenylate kinase family. Monomer.

The protein localises to the cytoplasm. It carries out the reaction AMP + ATP = 2 ADP. The protein operates within purine metabolism; AMP biosynthesis via salvage pathway; AMP from ADP: step 1/1. Catalyzes the reversible transfer of the terminal phosphate group between ATP and AMP. Plays an important role in cellular energy homeostasis and in adenine nucleotide metabolism. The polypeptide is Adenylate kinase (Chlamydia abortus (strain DSM 27085 / S26/3) (Chlamydophila abortus)).